Consider the following 434-residue polypeptide: ATP-dependent protease ATPase subunit HslU (434 aa).

Residues V18, 60 to 65 (GVGKTE), D247, E312, and R384 each bind ATP.

The protein belongs to the ClpX chaperone family. HslU subfamily. As to quaternary structure, a double ring-shaped homohexamer of HslV is capped on each side by a ring-shaped HslU homohexamer. The assembly of the HslU/HslV complex is dependent on binding of ATP.

The protein localises to the cytoplasm. In terms of biological role, ATPase subunit of a proteasome-like degradation complex; this subunit has chaperone activity. The binding of ATP and its subsequent hydrolysis by HslU are essential for unfolding of protein substrates subsequently hydrolyzed by HslV. HslU recognizes the N-terminal part of its protein substrates and unfolds these before they are guided to HslV for hydrolysis. This Phenylobacterium zucineum (strain HLK1) protein is ATP-dependent protease ATPase subunit HslU.